Here is a 566-residue protein sequence, read N- to C-terminus: Protein downstream neighbor of Son (566 aa).

The disordered stretch occupies residues 1–110 (MALSVPGYSP…QPEAPVPFLD (110 aa)). Phosphoserine is present on residues Ser-28 and Ser-34. Residues 62 to 72 (GGRGGGSGGGP) are compositionally biased toward gly residues. The span at 73-82 (AAARRNPFAR) shows a compositional bias: low complexity.

It belongs to the DONSON family. In terms of assembly, component of the replisome complex composed of at least DONSON, MCM2, MCM7, PCNA and TICRR; interaction at least with PCNA occurs during DNA replication. As to expression, expressed in the brain, with higher levels in prenatal compared to adult brain.

The protein resides in the nucleus. Replisome component that maintains genome stability by protecting stalled or damaged replication forks. After the induction of replication stress, required for the stabilization of stalled replication forks, the efficient activation of the intra-S-phase and G/2M cell-cycle checkpoints and the maintenance of genome stability. The polypeptide is Protein downstream neighbor of Son (DONSON) (Homo sapiens (Human)).